We begin with the raw amino-acid sequence, 160 residues long: Probable prefoldin subunit 5 (160 aa).

This sequence belongs to the prefoldin subunit alpha family. As to quaternary structure, heterohexamer of two PFD-alpha type and four PFD-beta type subunits.

In terms of biological role, binds specifically to cytosolic chaperonin (c-CPN) and transfers target proteins to it. Binds to nascent polypeptide chain and promotes folding in an environment in which there are many competing pathways for nonnative proteins. The chain is Probable prefoldin subunit 5 (pfdn5) from Dictyostelium discoideum (Social amoeba).